Reading from the N-terminus, the 159-residue chain is Large ribosomal subunit protein uL22 (159 aa).

The protein belongs to the universal ribosomal protein uL22 family. In terms of assembly, part of the 50S ribosomal subunit.

In terms of biological role, this protein binds specifically to 23S rRNA; its binding is stimulated by other ribosomal proteins, e.g. L4, L17, and L20. It is important during the early stages of 50S assembly. It makes multiple contacts with different domains of the 23S rRNA in the assembled 50S subunit and ribosome. The globular domain of the protein is located near the polypeptide exit tunnel on the outside of the subunit, while an extended beta-hairpin is found that lines the wall of the exit tunnel in the center of the 70S ribosome. This is Large ribosomal subunit protein uL22 from Thermotoga sp. (strain RQ2).